A 109-amino-acid chain; its full sequence is Large ribosomal subunit protein uL24 (109 aa).

The protein belongs to the universal ribosomal protein uL24 family. As to quaternary structure, part of the 50S ribosomal subunit.

Functionally, one of two assembly initiator proteins, it binds directly to the 5'-end of the 23S rRNA, where it nucleates assembly of the 50S subunit. In terms of biological role, one of the proteins that surrounds the polypeptide exit tunnel on the outside of the subunit. The polypeptide is Large ribosomal subunit protein uL24 (Legionella pneumophila subsp. pneumophila (strain Philadelphia 1 / ATCC 33152 / DSM 7513)).